Here is a 472-residue protein sequence, read N- to C-terminus: uncharacterized protein (472 aa).

14 helical membrane passes run 14–34, 53–73, 80–100, 113–133, 142–162, 169–189, 202–222, 227–247, 263–283, 302–322, 333–353, 359–379, 405–427, and 437–457; these read VIVG…TLLI, WLTT…AFLI, ALLI…AFAP, AAGA…IFPI, MVGL…GWAV, SLFY…SILM, ILSV…FSSV, WSSS…LLFI, FTFG…ALLI, FDTG…SPII, GLAI…MQLT, AWIV…MMPV, VGGS…HAGT, and GMNA…LLSF.

This sequence belongs to the major facilitator superfamily. EmrB family.

It localises to the cell membrane. This is an uncharacterized protein from Bacillus subtilis (strain 168).